We begin with the raw amino-acid sequence, 369 residues long: Geranylgeranyl pyrophosphate synthase, chloroplastic (369 aa).

3 residues coordinate isopentenyl diphosphate: Lys-118, Arg-121, and His-150. 2 residues coordinate Mg(2+): Asp-157 and Asp-163. Residue Arg-168 coordinates dimethylallyl diphosphate. Arg-169 lines the isopentenyl diphosphate pocket. Residues Lys-254, Thr-255, Gln-292, Lys-309, and Lys-319 each contribute to the dimethylallyl diphosphate site.

Belongs to the FPP/GGPP synthase family. As to quaternary structure, monomer. Requires Mg(2+) as cofactor.

It localises to the plastid. Its subcellular location is the chloroplast. It catalyses the reaction isopentenyl diphosphate + dimethylallyl diphosphate = (2E)-geranyl diphosphate + diphosphate. The enzyme catalyses isopentenyl diphosphate + (2E)-geranyl diphosphate = (2E,6E)-farnesyl diphosphate + diphosphate. It carries out the reaction isopentenyl diphosphate + (2E,6E)-farnesyl diphosphate = (2E,6E,10E)-geranylgeranyl diphosphate + diphosphate. It functions in the pathway isoprenoid biosynthesis; farnesyl diphosphate biosynthesis; farnesyl diphosphate from geranyl diphosphate and isopentenyl diphosphate: step 1/1. It participates in isoprenoid biosynthesis; geranyl diphosphate biosynthesis; geranyl diphosphate from dimethylallyl diphosphate and isopentenyl diphosphate: step 1/1. The protein operates within isoprenoid biosynthesis; geranylgeranyl diphosphate biosynthesis; geranylgeranyl diphosphate from farnesyl diphosphate and isopentenyl diphosphate: step 1/1. Catalyzes the trans-addition of the three molecules of IPP onto DMAPP to form geranylgeranyl pyrophosphate. This chain is Geranylgeranyl pyrophosphate synthase, chloroplastic, found in Capsicum annuum (Capsicum pepper).